The primary structure comprises 374 residues: Phosphatidyl-myo-inositol mannosyltransferase (374 aa).

Y9 and G16 together coordinate GDP-alpha-D-mannose. A 1,2-diacyl-sn-glycero-3-phospho-(1D-myo-inositol) is bound by residues Q18, 62–63 (YN), and R68. Residues R196, 201 to 202 (RK), 251 to 253 (VDD), K256, 274 to 278 (ESFGI), and E282 each bind GDP-alpha-D-mannose.

The protein belongs to the glycosyltransferase group 1 family. Glycosyltransferase 4 subfamily. As to quaternary structure, monomer. Mg(2+) is required as a cofactor.

The protein resides in the cell membrane. It carries out the reaction a 1,2-diacyl-sn-glycero-3-phospho-(1D-myo-inositol) + GDP-alpha-D-mannose = a 1,2-diacyl-sn-glycero-3-phospho-[alpha-D-mannopyranosyl-(1&lt;-&gt;6)-D-myo-inositol] + GDP + H(+). The protein operates within phospholipid metabolism; phosphatidylinositol metabolism. Functionally, involved in the biosynthesis of phosphatidyl-myo-inositol mannosides (PIM) which are early precursors in the biosynthesis of lipomannans (LM) and lipoarabinomannans (LAM). Catalyzes the addition of a mannosyl residue from GDP-D-mannose (GDP-Man) to the position 2 of the carrier lipid phosphatidyl-myo-inositol (PI) to generate a phosphatidyl-myo-inositol bearing an alpha-1,2-linked mannose residue (PIM1). The polypeptide is Phosphatidyl-myo-inositol mannosyltransferase (Mycobacterium leprae (strain TN)).